The primary structure comprises 332 residues: Glyceraldehyde-3-phosphate dehydrogenase (332 aa).

NAD(+) is bound by residues 11-12 (RI), Asp-34, Arg-78, and Ser-120. D-glyceraldehyde 3-phosphate contacts are provided by residues 151–153 (SCT), Thr-182, Arg-197, 210–211 (TG), and Arg-233. Cys-152 acts as the Nucleophile in catalysis. Asn-314 serves as a coordination point for NAD(+).

It belongs to the glyceraldehyde-3-phosphate dehydrogenase family. In terms of assembly, homotetramer.

The protein localises to the cytoplasm. It catalyses the reaction D-glyceraldehyde 3-phosphate + phosphate + NAD(+) = (2R)-3-phospho-glyceroyl phosphate + NADH + H(+). Its pathway is carbohydrate degradation; glycolysis; pyruvate from D-glyceraldehyde 3-phosphate: step 1/5. Functionally, catalyzes the oxidative phosphorylation of glyceraldehyde 3-phosphate (G3P) to 1,3-bisphosphoglycerate (BPG) using the cofactor NAD. The first reaction step involves the formation of a hemiacetal intermediate between G3P and a cysteine residue, and this hemiacetal intermediate is then oxidized to a thioester, with concomitant reduction of NAD to NADH. The reduced NADH is then exchanged with the second NAD, and the thioester is attacked by a nucleophilic inorganic phosphate to produce BPG. The protein is Glyceraldehyde-3-phosphate dehydrogenase (gap) of Kitasatospora aureofaciens (Streptomyces aureofaciens).